Here is a 452-residue protein sequence, read N- to C-terminus: Isocitrate dehydrogenase [NADP], mitochondrial (452 aa).

A mitochondrion-targeting transit peptide spans 1–39 (MAGYLRAVSSLCRASGSTRTWAPAALNVPSWPEQPRRHY). K45, K48, K67, and K69 each carry N6-acetyllysine. 2 positions are modified to N6-acetyllysine; alternate: K80 and K106. K80 and K106 each carry N6-succinyllysine; alternate. Residues 115–117 (TIT) and R122 each bind NADP(+). T117 lines the D-threo-isocitrate pocket. D-threo-isocitrate is bound by residues 134–140 (SPNGTIR) and R149. K155 is modified (N6-acetyllysine). K166 bears the N6-acetyllysine; alternate mark. K166 is subject to N6-succinyllysine; alternate. R172 is a binding site for D-threo-isocitrate. An N6-acetyllysine; alternate mark is found at K180 and K193. N6-succinyllysine; alternate occurs at positions 180 and 193. K199 is modified (N6-acetyllysine). At K256 the chain carries N6-acetyllysine; alternate. N6-succinyllysine; alternate is present on K256. K263, K272, K275, and K280 each carry N6-acetyllysine. Residue K282 is modified to N6-acetyllysine; alternate. K282 carries the post-translational modification N6-succinyllysine; alternate. D291 contacts Mn(2+). NADP(+) is bound at residue K299. D314 provides a ligand contact to Mn(2+). NADP(+)-binding positions include 349 to 354 (GTVTRH) and N367. Position 384 is an N6-acetyllysine; alternate (K384). An N6-succinyllysine; alternate modification is found at K384. N6-acetyllysine occurs at positions 400, 413, and 442.

The protein belongs to the isocitrate and isopropylmalate dehydrogenases family. Homodimer. Requires Mg(2+) as cofactor. Mn(2+) serves as cofactor. In terms of processing, acetylation at Lys-413 dramatically reduces catalytic activity. Deacetylated by SIRT3.

Its subcellular location is the mitochondrion. It carries out the reaction D-threo-isocitrate + NADP(+) = 2-oxoglutarate + CO2 + NADPH. Its function is as follows. Plays a role in intermediary metabolism and energy production. It may tightly associate or interact with the pyruvate dehydrogenase complex. The sequence is that of Isocitrate dehydrogenase [NADP], mitochondrial (Idh2) from Rattus norvegicus (Rat).